A 394-amino-acid chain; its full sequence is Envelope glycoprotein D (394 aa).

A signal peptide spans 1–25; that stretch reads MGGAAARLGAVILFVVIVGLHGVRS. The interaction with TNFRSF14 stretch occupies residues 26 to 57; that stretch reads KYALVDASLKMADPNRFRGKDLPVLDQLTDPP. At 26 to 340 the chain is on the virion surface side; that stretch reads KYALVDASLK…YHPPATPNNM (315 aa). Residue H64 participates in Zn(2+) binding. Cystine bridges form between C91–C214, C131–C227, and C143–C152. 2 N-linked (GlcNAc...) asparagine; by host glycosylation sites follow: N119 and N146. Position 240 (D240) interacts with Zn(2+). The segment at 261 to 305 is profusion; that stretch reads LKIAGWHGPKAPYTSTLLPPELSETPNATQPELAPEDPEDSALLE. Residues 275–301 form a disordered region; the sequence is STLLPPELSETPNATQPELAPEDPEDS. N287 carries an N-linked (GlcNAc...) asparagine; by host glycan. A helical transmembrane segment spans residues 341–361; the sequence is GLIAGAVGGSLLAALVICGIV. Residues 362 to 394 are Intravirion-facing; that stretch reads YWMRRHTQKAPKRIRLPHIREDDQPSSHQPLFY. Residues 375–394 are disordered; sequence IRLPHIREDDQPSSHQPLFY.

Belongs to the herpesviridae glycoprotein D family. In terms of assembly, homodimer. Interacts with host receptor TNFRSF14. Interacts with host receptor NECTIN1. Interacts (via profusion domain) with gB; this interaction occurs in the absence of gH/gL. Interacts (via profusion domain) with gH/gL heterodimer; this interaction occurs in the absence of gB. Associates with the gB-gH/gL-gD complex. Interacts (via C-terminus) with UL11 tegument protein. Interacts (via C-terminus) with VP22 tegument protein; this interaction has been demonstrated in other strains, but might be very weak since PubMed:19279114 has failed to see it. Interacts with host RSAD2.

It is found in the virion membrane. Its subcellular location is the host Golgi apparatus. Functionally, envelope glycoprotein that binds to the host cell entry receptors NECTIN1, TNFRSF14/HVEM and 3-O-sulfated heparan sulfate, promoting the virus entry into host cells. May trigger fusion with host membrane, by recruiting the fusion machinery composed of gB and gH/gL. The protein is Envelope glycoprotein D (gD) of Homo sapiens (Human).